A 34-amino-acid chain; its full sequence is Photosystem II reaction center protein Psb30 (34 aa).

Residues 6 to 26 form a helical membrane-spanning segment; that stretch reads VVFQLMALFFVLAAGPAVVVL.

The protein belongs to the Psb30/Ycf12 family. In terms of assembly, PSII is composed of 1 copy each of membrane proteins PsbA, PsbB, PsbC, PsbD, PsbE, PsbF, PsbH, PsbI, PsbJ, PsbK, PsbL, PsbM, PsbT, PsbX, PsbY, PsbZ, Psb30/Ycf12, peripheral proteins of the oxygen-evolving complex and a large number of cofactors. It forms dimeric complexes.

Its subcellular location is the plastid. The protein localises to the chloroplast thylakoid membrane. Its function is as follows. A core subunit of photosystem II (PSII), probably helps stabilize the reaction center. This is Photosystem II reaction center protein Psb30 from Stigeoclonium helveticum (Green alga).